Consider the following 108-residue polypeptide: Nucleoid-associated protein PSHAa1202 (108 aa).

Disordered stretches follow at residues M1–M20 and T87–F108.

It belongs to the YbaB/EbfC family. In terms of assembly, homodimer.

It localises to the cytoplasm. The protein localises to the nucleoid. Binds to DNA and alters its conformation. May be involved in regulation of gene expression, nucleoid organization and DNA protection. The sequence is that of Nucleoid-associated protein PSHAa1202 from Pseudoalteromonas translucida (strain TAC 125).